Consider the following 633-residue polypeptide: DNA mismatch repair protein MutL (633 aa).

A disordered region spans residues 338–407; that stretch reads AAPEPERTLP…VPPPTLRAIP (70 aa). Positions 366 to 391 are enriched in low complexity; that stretch reads PGSAFPAAARPAPASSAAQPPLSSSA.

It belongs to the DNA mismatch repair MutL/HexB family.

This protein is involved in the repair of mismatches in DNA. It is required for dam-dependent methyl-directed DNA mismatch repair. May act as a 'molecular matchmaker', a protein that promotes the formation of a stable complex between two or more DNA-binding proteins in an ATP-dependent manner without itself being part of a final effector complex. This chain is DNA mismatch repair protein MutL, found in Akkermansia muciniphila (strain ATCC BAA-835 / DSM 22959 / JCM 33894 / BCRC 81048 / CCUG 64013 / CIP 107961 / Muc).